The sequence spans 134 residues: Cilia- and flagella-associated protein 144 (134 aa).

Residues 76–95 (QGPRKKYPETQTENQEVGWD) are disordered.

This sequence belongs to the CFAP144 family. Microtubule inner protein component of sperm flagellar doublet microtubules.

It is found in the cytoplasm. The protein localises to the cytoskeleton. Its subcellular location is the cilium axoneme. It localises to the flagellum axoneme. Microtubule inner protein (MIP) part of the dynein-decorated doublet microtubules (DMTs) in cilia axoneme, which is required for motile cilia beating. In Homo sapiens (Human), this protein is Cilia- and flagella-associated protein 144.